Consider the following 85-residue polypeptide: Putative transmembrane protein ORF28 (85 aa).

2 helical membrane passes run 32–52 (IMLL…VQIV) and 59–79 (LLSV…MLGI).

Its subcellular location is the host membrane. This chain is Putative transmembrane protein ORF28, found in Haloarcula hispanica (His1V).